Consider the following 244-residue polypeptide: 1-(5-phosphoribosyl)-5-[(5-phosphoribosylamino)methylideneamino] imidazole-4-carboxamide isomerase (244 aa).

Catalysis depends on Asp11, which acts as the Proton acceptor. Residue Asp132 is the Proton donor of the active site.

It belongs to the HisA/HisF family.

Its subcellular location is the cytoplasm. It catalyses the reaction 1-(5-phospho-beta-D-ribosyl)-5-[(5-phospho-beta-D-ribosylamino)methylideneamino]imidazole-4-carboxamide = 5-[(5-phospho-1-deoxy-D-ribulos-1-ylimino)methylamino]-1-(5-phospho-beta-D-ribosyl)imidazole-4-carboxamide. Its pathway is amino-acid biosynthesis; L-histidine biosynthesis; L-histidine from 5-phospho-alpha-D-ribose 1-diphosphate: step 4/9. The chain is 1-(5-phosphoribosyl)-5-[(5-phosphoribosylamino)methylideneamino] imidazole-4-carboxamide isomerase from Sphingopyxis alaskensis (strain DSM 13593 / LMG 18877 / RB2256) (Sphingomonas alaskensis).